Here is a 298-residue protein sequence, read N- to C-terminus: Acetyl-coenzyme A carboxylase carboxyl transferase subunit beta (298 aa).

The CoA carboxyltransferase N-terminal domain occupies 26–295; it reads LWIKCPETGE…DNANAVVPLA (270 aa).

This sequence belongs to the AccD/PCCB family. Acetyl-CoA carboxylase is a heterohexamer composed of biotin carboxyl carrier protein (AccB), biotin carboxylase (AccC) and two subunits each of ACCase subunit alpha (AccA) and ACCase subunit beta (AccD).

It is found in the cytoplasm. It carries out the reaction N(6)-carboxybiotinyl-L-lysyl-[protein] + acetyl-CoA = N(6)-biotinyl-L-lysyl-[protein] + malonyl-CoA. It functions in the pathway lipid metabolism; malonyl-CoA biosynthesis; malonyl-CoA from acetyl-CoA: step 1/1. Component of the acetyl coenzyme A carboxylase (ACC) complex. Biotin carboxylase (BC) catalyzes the carboxylation of biotin on its carrier protein (BCCP) and then the CO(2) group is transferred by the transcarboxylase to acetyl-CoA to form malonyl-CoA. The sequence is that of Acetyl-coenzyme A carboxylase carboxyl transferase subunit beta from Agrobacterium fabrum (strain C58 / ATCC 33970) (Agrobacterium tumefaciens (strain C58)).